The chain runs to 417 residues: Serine hydroxymethyltransferase (417 aa).

Residue Lys-54 is modified to N6-acetyllysine. Residues Leu-121 and 125–127 contribute to the (6S)-5,6,7,8-tetrahydrofolate site; that span reads GHL. At Lys-229 the chain carries N6-(pyridoxal phosphate)lysine. Residues Lys-250, Lys-285, and Lys-354 each carry the N6-acetyllysine modification. 355-357 lines the (6S)-5,6,7,8-tetrahydrofolate pocket; it reads SPF. Position 375 is an N6-acetyllysine (Lys-375).

Belongs to the SHMT family. In terms of assembly, homodimer. The cofactor is pyridoxal 5'-phosphate.

Its subcellular location is the cytoplasm. It carries out the reaction (6R)-5,10-methylene-5,6,7,8-tetrahydrofolate + glycine + H2O = (6S)-5,6,7,8-tetrahydrofolate + L-serine. Its pathway is one-carbon metabolism; tetrahydrofolate interconversion. It participates in amino-acid biosynthesis; glycine biosynthesis; glycine from L-serine: step 1/1. Functionally, catalyzes the reversible interconversion of serine and glycine with tetrahydrofolate (THF) serving as the one-carbon carrier. This reaction serves as the major source of one-carbon groups required for the biosynthesis of purines, thymidylate, methionine, and other important biomolecules. Also exhibits THF-independent aldolase activity toward beta-hydroxyamino acids, producing glycine and aldehydes, via a retro-aldol mechanism. This chain is Serine hydroxymethyltransferase, found in Escherichia coli O17:K52:H18 (strain UMN026 / ExPEC).